Reading from the N-terminus, the 68-residue chain is Wasabi receptor toxin (68 aa).

The N-terminal stretch at 1 to 21 (MKYFTLALTLLFLLLINPCKD) is a signal peptide. Positions 22–35 (MNFAWAESSEKVER) are excised as a propeptide. 2 disulfides stabilise this stretch: C44–C62 and C48–C58.

This sequence belongs to the short scorpion toxin superfamily. Potassium channel inhibitor kappa-KTx family. Kappa-KTx 1 subfamily. Monomer. Expressed by the venom gland.

The protein localises to the secreted. It localises to the host cytoplasm. Functionally, cell-penetrating peptide (CPP) with defensive purpose that induces pain by specifically activating mammalian sensory neuron TRPA1 channels. It non-covalently binds to the same region than other TRPA1 agonists (irritants), but acts via a distinct biochemical mechanism. Its binding stabilizes the TRPA1 open state and diminishes calcium-permeability. Consequently, it produces pain and pain hypersensitivity, but fails to trigger efferent release of neuropeptides (CGRP) and neurogenic inflammation typically produced by noxious electrophiles. Is not active on voltage-gated potassium channels and other TRP channels. The chain is Wasabi receptor toxin from Urodacus manicatus (Black rock scorpion).